The primary structure comprises 436 residues: Tryptophan synthase beta chain (436 aa).

Residue Lys-129 is modified to N6-(pyridoxal phosphate)lysine.

It belongs to the TrpB family. Tetramer of two alpha and two beta chains. It depends on pyridoxal 5'-phosphate as a cofactor.

It carries out the reaction (1S,2R)-1-C-(indol-3-yl)glycerol 3-phosphate + L-serine = D-glyceraldehyde 3-phosphate + L-tryptophan + H2O. Its pathway is amino-acid biosynthesis; L-tryptophan biosynthesis; L-tryptophan from chorismate: step 5/5. Functionally, the beta subunit is responsible for the synthesis of L-tryptophan from indole and L-serine. The chain is Tryptophan synthase beta chain from Prochlorococcus marinus (strain MIT 9313).